A 138-amino-acid polypeptide reads, in one-letter code: Large ribosomal subunit protein uL16 (138 aa).

Belongs to the universal ribosomal protein uL16 family. As to quaternary structure, part of the 50S ribosomal subunit.

Functionally, binds 23S rRNA and is also seen to make contacts with the A and possibly P site tRNAs. The protein is Large ribosomal subunit protein uL16 of Anaeromyxobacter dehalogenans (strain 2CP-1 / ATCC BAA-258).